Here is a 323-residue protein sequence, read N- to C-terminus: Zinc finger protein 784 (323 aa).

A disordered region spans residues 1-26 (MAAARPEAQSRSSPTPESRSQEPLDL). Residues 9–18 (QSRSSPTPES) are compositionally biased toward polar residues. A Phosphoserine modification is found at S13. C2H2-type zinc fingers lie at residues 65 to 87 (FHCA…EHGH), 101 to 123 (SRCH…YSLH), 129 to 151 (YRCA…QHRH), 196 to 218 (FACR…ERVH), 224 to 246 (YHCG…ARIH), and 252 to 274 (FRCT…QRTH). Residues 269–323 (KHQRTHFHGPGPGLGDSGGQLGSSAAEGSGSGCGVGDPAEEGRGETAKVKVEADQ) form a disordered region. Over residues 278 to 289 (PGPGLGDSGGQL) the composition is skewed to gly residues. Residues 308–323 (EEGRGETAKVKVEADQ) are compositionally biased toward basic and acidic residues. K318 participates in a covalent cross-link: Glycyl lysine isopeptide (Lys-Gly) (interchain with G-Cter in SUMO2).

It belongs to the krueppel C2H2-type zinc-finger protein family.

It is found in the nucleus. In terms of biological role, may be involved in transcriptional regulation. This is Zinc finger protein 784 (ZNF784) from Homo sapiens (Human).